The sequence spans 172 residues: 3-hydroxydecanoyl-[acyl-carrier-protein] dehydratase (172 aa).

His-71 is an active-site residue.

This sequence belongs to the thioester dehydratase family. FabA subfamily. Homodimer.

The protein localises to the cytoplasm. The enzyme catalyses a (3R)-hydroxyacyl-[ACP] = a (2E)-enoyl-[ACP] + H2O. The catalysed reaction is (3R)-hydroxydecanoyl-[ACP] = (2E)-decenoyl-[ACP] + H2O. It carries out the reaction (2E)-decenoyl-[ACP] = (3Z)-decenoyl-[ACP]. It functions in the pathway lipid metabolism; fatty acid biosynthesis. Functionally, necessary for the introduction of cis unsaturation into fatty acids. Catalyzes the dehydration of (3R)-3-hydroxydecanoyl-ACP to E-(2)-decenoyl-ACP and then its isomerization to Z-(3)-decenoyl-ACP. Can catalyze the dehydratase reaction for beta-hydroxyacyl-ACPs with saturated chain lengths up to 16:0, being most active on intermediate chain length. This is 3-hydroxydecanoyl-[acyl-carrier-protein] dehydratase from Brucella ovis (strain ATCC 25840 / 63/290 / NCTC 10512).